Consider the following 80-residue polypeptide: Exodeoxyribonuclease 7 small subunit (80 aa).

This sequence belongs to the XseB family. As to quaternary structure, heterooligomer composed of large and small subunits.

It localises to the cytoplasm. It carries out the reaction Exonucleolytic cleavage in either 5'- to 3'- or 3'- to 5'-direction to yield nucleoside 5'-phosphates.. Functionally, bidirectionally degrades single-stranded DNA into large acid-insoluble oligonucleotides, which are then degraded further into small acid-soluble oligonucleotides. This chain is Exodeoxyribonuclease 7 small subunit, found in Phenylobacterium zucineum (strain HLK1).